The sequence spans 732 residues: Beta-galactosidase 5 (732 aa).

The first 23 residues, 1 to 23 (MGTTILVLSKILTFLLTTMLIGS), serve as a signal peptide directing secretion. The Proton donor role is filled by Glu-187. Glu-256 serves as the catalytic Nucleophile. The N-linked (GlcNAc...) asparagine glycan is linked to Asn-466.

It belongs to the glycosyl hydrolase 35 family. In terms of tissue distribution, expressed in leaves and flowers.

Its subcellular location is the secreted. The protein resides in the extracellular space. It is found in the apoplast. The catalysed reaction is Hydrolysis of terminal non-reducing beta-D-galactose residues in beta-D-galactosides.. This is Beta-galactosidase 5 (BGAL5) from Arabidopsis thaliana (Mouse-ear cress).